The sequence spans 549 residues: Acetyl-coenzyme A transporter 1 (549 aa).

Residues 1–12 are compositionally biased toward basic and acidic residues; the sequence is MSPTISHKDSSR. Residues 1 to 46 are disordered; that stretch reads MSPTISHKDSSRQRRPGNFSHSLDMKSGPLPPGGWDDSHLDSAGRE. Topologically, residues 1 to 74 are cytoplasmic; it reads MSPTISHKDS…PQSFRAELSS (74 aa). Ser-22 and Ser-42 each carry phosphoserine. Residues 36-46 are compositionally biased toward basic and acidic residues; that stretch reads DDSHLDSAGRE. Residues 75-95 form a helical membrane-spanning segment; it reads ILLLLFLYVLQGIPLGLAGSI. At 96–113 the chain is on the extracellular side; that stretch reads PLILQSKNVSYTDQAFFS. Asn-103 carries N-linked (GlcNAc...) asparagine glycosylation. A helical membrane pass occupies residues 114-134; it reads FVFWPFSLKLLWAPLVDAVYV. Residues 135 to 141 are Cytoplasmic-facing; sequence KNFGRRK. The chain crosses the membrane as a helical span at residues 142-162; that stretch reads SWLVPTQYILGLFMIYLSTQV. Topologically, residues 163–175 are extracellular; the sequence is DRLLGNTDDRTPD. Residues 176–196 traverse the membrane as a helical segment; sequence VIALTVAFFLFEFLAATQDIA. At 197–217 the chain is on the cytoplasmic side; sequence VDGWALTMLSRENVGYASTCN. The chain crosses the membrane as a helical span at residues 218–238; sequence SVGQTAGYFLGNVLFLALESA. At 239–256 the chain is on the extracellular side; sequence DFCNKYLRFQPQPRGIVT. Residues 257–277 traverse the membrane as a helical segment; sequence LSDFLFFWGTVFLITTTLVAL. The Cytoplasmic portion of the chain corresponds to 278 to 299; that stretch reads LKKENEVSVVKEETQGITDTYK. A helical transmembrane segment spans residues 300–320; the sequence is LLFAIIKMPAVLTFCLLILTA. Topologically, residues 321–343 are extracellular; the sequence is KIGFSAADAVTGLKLVEEGVPKE. The chain crosses the membrane as a helical span at residues 344-364; the sequence is HLALLAVPMVPLQIILPLIIS. The Cytoplasmic portion of the chain corresponds to 365-378; that stretch reads KYTAGPQPLNTFYK. Residues 379-398 traverse the membrane as a helical segment; the sequence is AMPYRLLLGLEYALLVWWTP. Residues 399 to 404 lie on the Extracellular side of the membrane; sequence KVEHQG. The chain crosses the membrane as a helical span at residues 405–425; that stretch reads GFPIYYYIVVLLSYALHQVTV. Topologically, residues 426–508 are cytoplasmic; the sequence is YSMYVSIMAF…LGGSCVTALD (83 aa). A helical membrane pass occupies residues 509–529; sequence GYYVESIICVFIGFGWWFFLG. Over 530-549 the chain is Extracellular; sequence PKFKKLQDEGSSSWKCKRNN.

The protein belongs to the SLC33A transporter family. As to quaternary structure, homodimerizes. Ubiquitous. Detected in heart, brain, placenta, lung, liver, skeletal muscle, kidney and pancreas. With strongest signals in pancreas.

It localises to the endoplasmic reticulum membrane. The catalysed reaction is acetyl-CoA(in) = acetyl-CoA(out). In terms of biological role, acetyl-CoA transporter that mediates active acetyl-CoA import through the endoplasmic reticulum (ER) membrane into the ER lumen where specific ER-based acetyl-CoA:lysine acetyltransferases are responsible for the acetylation of ER-based protein substrates, such as BACE1. Necessary for O-acetylation of gangliosides. The sequence is that of Acetyl-coenzyme A transporter 1 from Homo sapiens (Human).